Reading from the N-terminus, the 943-residue chain is UvrABC system protein A (943 aa).

An ATP-binding site is contributed by 32 to 39 (GLSGSGKS). A C4-type zinc finger spans residues 251-278 (CPVCGFTVPELEPRLFSFNAPFGSCSEC). ABC transporter domains follow at residues 308 to 589 (WNPI…SKSI) and 609 to 937 (GNGR…HYLK). 641–648 (GVSGSGKS) is a binding site for ATP. A C4-type zinc finger spans residues 740–766 (CEACSGDGIIKIEMHFLPDVYVACEVC).

This sequence belongs to the ABC transporter superfamily. UvrA family. As to quaternary structure, forms a heterotetramer with UvrB during the search for lesions.

Its subcellular location is the cytoplasm. In terms of biological role, the UvrABC repair system catalyzes the recognition and processing of DNA lesions. UvrA is an ATPase and a DNA-binding protein. A damage recognition complex composed of 2 UvrA and 2 UvrB subunits scans DNA for abnormalities. When the presence of a lesion has been verified by UvrB, the UvrA molecules dissociate. This is UvrABC system protein A from Streptococcus pneumoniae serotype 4 (strain ATCC BAA-334 / TIGR4).